We begin with the raw amino-acid sequence, 596 residues long: Actin-related protein 9 (596 aa).

Positions 148 to 178 are disordered; the sequence is LASPAETSPDKGDASASEAVPDVTDSKDTSE.

Belongs to the actin family. ARP8 subfamily.

This is Actin-related protein 9 (ARP9) from Arabidopsis thaliana (Mouse-ear cress).